The following is a 356-amino-acid chain: MKKILFTGGGTVGHVTLNLLLIPKFIKEGWQVHYIGDKNGIEYQEIQKSGLDVTFHSVATGKLRRYFSWQNLLDGFKVIWGIFQSLSIMLKVRPQALFSKGGFVSVPPVIAARLSGVPVYVHESDLSIGLANKIAYKCATKMYATFEQPSSLTKIEHVGAVTKVSGTKSDLPQELEEIRQYFDKELPTLLFVGGSAGAKVFNDFVSQNQATLTERYNVINLTGDASLDVLSDRLFRRAYVTDLYQPLMDLADVVVTRGGSNTIFELLAMAKLHIIVPLGREASRGDQIENADYFVKKGYAVKLEEEQLTLEGLEASVEQILRDKNTYYQAMKNSHEIKSVEDFYAVLKNDINKGKK.

The UDP-N-acetyl-alpha-D-glucosamine site is built by S195 and Q287.

This sequence belongs to the glycosyltransferase 28 family. MurG subfamily.

It localises to the cell membrane. It catalyses the reaction Mur2Ac(oyl-L-Ala-gamma-D-Glu-L-Lys-D-Ala-D-Ala)-di-trans,octa-cis-undecaprenyl diphosphate + UDP-N-acetyl-alpha-D-glucosamine = beta-D-GlcNAc-(1-&gt;4)-Mur2Ac(oyl-L-Ala-gamma-D-Glu-L-Lys-D-Ala-D-Ala)-di-trans,octa-cis-undecaprenyl diphosphate + UDP + H(+). The protein operates within cell wall biogenesis; peptidoglycan biosynthesis. Functionally, cell wall formation. Catalyzes the transfer of a GlcNAc subunit on undecaprenyl-pyrophosphoryl-MurNAc-pentapeptide (lipid intermediate I) to form undecaprenyl-pyrophosphoryl-MurNAc-(pentapeptide)GlcNAc (lipid intermediate II). This Streptococcus gordonii (strain Challis / ATCC 35105 / BCRC 15272 / CH1 / DL1 / V288) protein is UDP-N-acetylglucosamine--N-acetylmuramyl-(pentapeptide) pyrophosphoryl-undecaprenol N-acetylglucosamine transferase.